A 907-amino-acid chain; its full sequence is Protein translocase subunit SecA (907 aa).

ATP contacts are provided by residues Gln87, 105–109 (GEGKT), and Asp511. The Zn(2+) site is built by Cys891, Cys893, Cys902, and His903.

This sequence belongs to the SecA family. Monomer and homodimer. Part of the essential Sec protein translocation apparatus which comprises SecA, SecYEG and auxiliary proteins SecDF-YajC and YidC. Requires Zn(2+) as cofactor.

The protein resides in the cell inner membrane. It is found in the cytoplasm. It carries out the reaction ATP + H2O + cellular proteinSide 1 = ADP + phosphate + cellular proteinSide 2.. Its function is as follows. Part of the Sec protein translocase complex. Interacts with the SecYEG preprotein conducting channel. Has a central role in coupling the hydrolysis of ATP to the transfer of proteins into and across the cell membrane, serving both as a receptor for the preprotein-SecB complex and as an ATP-driven molecular motor driving the stepwise translocation of polypeptide chains across the membrane. In Aromatoleum aromaticum (strain DSM 19018 / LMG 30748 / EbN1) (Azoarcus sp. (strain EbN1)), this protein is Protein translocase subunit SecA.